A 686-amino-acid polypeptide reads, in one-letter code: AsmA family protein YhjG (686 aa).

At 1–6 (MSKAGK) the chain is on the cytoplasmic side. The helical transmembrane segment at 7-27 (ITAAISGAFLLLIVVAIILIA) threads the bilayer. The Periplasmic portion of the chain corresponds to 28–686 (TFDWNRLKPT…CRTILSQMKK (659 aa)). The tract at residues 372–396 (VDSGKGAEKSKRSEQKKGEKSVQPA) is disordered. Residues 376–391 (KGAEKSKRSEQKKGEK) are compositionally biased toward basic and acidic residues.

This sequence belongs to the AsmA family.

The protein resides in the cell inner membrane. This Escherichia coli (strain K12) protein is AsmA family protein YhjG (yhjG).